Here is a 145-residue protein sequence, read N- to C-terminus: Holo-[acyl-carrier-protein] synthase (145 aa).

The Mg(2+) site is built by Asp9 and Glu63.

It belongs to the P-Pant transferase superfamily. AcpS family. The cofactor is Mg(2+).

It localises to the cytoplasm. The enzyme catalyses apo-[ACP] + CoA = holo-[ACP] + adenosine 3',5'-bisphosphate + H(+). Its function is as follows. Transfers the 4'-phosphopantetheine moiety from coenzyme A to a Ser of acyl-carrier-protein. The protein is Holo-[acyl-carrier-protein] synthase of Burkholderia vietnamiensis (strain G4 / LMG 22486) (Burkholderia cepacia (strain R1808)).